Here is a 175-residue protein sequence, read N- to C-terminus: uncharacterized protein (175 aa).

The signal sequence occupies residues 1 to 33; it reads MERLPYEIVSTIFRKAILHYVLIRGTTYPQSLA.

This is an uncharacterized protein from Methanocaldococcus jannaschii (strain ATCC 43067 / DSM 2661 / JAL-1 / JCM 10045 / NBRC 100440) (Methanococcus jannaschii).